Here is a 254-residue protein sequence, read N- to C-terminus: N-acetylglucosaminyldiphosphoundecaprenol N-acetyl-beta-D-mannosaminyltransferase (254 aa).

This sequence belongs to the glycosyltransferase 26 family. TagA/TarA subfamily.

It carries out the reaction UDP-N-acetyl-alpha-D-mannosamine + N-acetyl-alpha-D-glucosaminyl-di-trans,octa-cis-undecaprenyl diphosphate = N-acetyl-beta-D-mannosaminyl-(1-&gt;4)-N-acetyl-alpha-D-glucosaminyl di-trans,octa-cis-undecaprenyl diphosphate + UDP + H(+). It functions in the pathway cell wall biogenesis; poly(ribitol phosphate) teichoic acid biosynthesis. Its function is as follows. Catalyzes the conversion of GlcNAc-PP-undecaprenol into ManNAc-GlcNAc-PP-undecaprenol, the first committed lipid intermediate in the de novo synthesis of teichoic acid. In Staphylococcus aureus (strain NCTC 8325 / PS 47), this protein is N-acetylglucosaminyldiphosphoundecaprenol N-acetyl-beta-D-mannosaminyltransferase.